Here is a 206-residue protein sequence, read N- to C-terminus: Outer-membrane lipoprotein carrier protein (206 aa).

A signal peptide spans 1-20 (MRLIRMLLPVLALTTLTAHA).

It belongs to the LolA family. In terms of assembly, monomer.

It localises to the periplasm. Its function is as follows. Participates in the translocation of lipoproteins from the inner membrane to the outer membrane. Only forms a complex with a lipoprotein if the residue after the N-terminal Cys is not an aspartate (The Asp acts as a targeting signal to indicate that the lipoprotein should stay in the inner membrane). The polypeptide is Outer-membrane lipoprotein carrier protein (Pseudomonas fluorescens (strain Pf0-1)).